The primary structure comprises 207 residues: Alpha-1-acid glycoprotein 1 (207 aa).

A signal peptide spans 1-18; that stretch reads MALHTVLIILSLLPMLEA. Position 19 is a pyrrolidone carboxylic acid (Gln-19). Residues Asn-25, Asn-34, Asn-76, Asn-94, and Asn-104 are each glycosylated (N-linked (GlcNAc...) asparagine). Cysteines 91 and 184 form a disulfide.

This sequence belongs to the calycin superfamily. Lipocalin family.

Its subcellular location is the secreted. Functions as a transport protein in the blood stream. Binds various ligands in the interior of its beta-barrel domain. Appears to function in modulating the activity of the immune system during the acute-phase reaction. In Mus musculus (Mouse), this protein is Alpha-1-acid glycoprotein 1 (Orm1).